Reading from the N-terminus, the 317-residue chain is Probable GTP 3',8-cyclase (317 aa).

The Radical SAM core domain maps to 4-223 (RYGRPLEDLR…KSEIREKHFR (220 aa)). Arg13 contributes to the GTP binding site. Residues Cys20, Cys24, and Cys27 each coordinate [4Fe-4S] cluster. Lys61 lines the GTP pocket. Residue Gly65 coordinates S-adenosyl-L-methionine. A GTP-binding site is contributed by Thr91. S-adenosyl-L-methionine is bound at residue Ser115. Position 152 (Lys152) interacts with GTP. The [4Fe-4S] cluster site is built by Cys246 and Cys249. 251–253 (RVR) is a GTP binding site. Cys263 contacts [4Fe-4S] cluster.

The protein belongs to the radical SAM superfamily. MoaA family. The cofactor is [4Fe-4S] cluster.

The enzyme catalyses GTP + AH2 + S-adenosyl-L-methionine = (8S)-3',8-cyclo-7,8-dihydroguanosine 5'-triphosphate + 5'-deoxyadenosine + L-methionine + A + H(+). It functions in the pathway cofactor biosynthesis; molybdopterin biosynthesis. Its function is as follows. Catalyzes the cyclization of GTP to (8S)-3',8-cyclo-7,8-dihydroguanosine 5'-triphosphate. This chain is Probable GTP 3',8-cyclase, found in Metallosphaera sedula (strain ATCC 51363 / DSM 5348 / JCM 9185 / NBRC 15509 / TH2).